We begin with the raw amino-acid sequence, 344 residues long: Arginine N-succinyltransferase (344 aa).

Leu-125 contacts succinyl-CoA. His-229 acts as the Proton donor in catalysis.

Belongs to the arginine N-succinyltransferase family.

It catalyses the reaction succinyl-CoA + L-arginine = N(2)-succinyl-L-arginine + CoA + H(+). The protein operates within amino-acid degradation; L-arginine degradation via AST pathway; L-glutamate and succinate from L-arginine: step 1/5. Catalyzes the transfer of succinyl-CoA to arginine to produce N(2)-succinylarginine. The sequence is that of Arginine N-succinyltransferase from Citrobacter koseri (strain ATCC BAA-895 / CDC 4225-83 / SGSC4696).